A 727-amino-acid polypeptide reads, in one-letter code: NHL repeat-containing protein 2 (727 aa).

Positions 43-198 (RERDLTVPEL…TLKFYKERGQ (156 aa)) constitute a Thioredoxin domain. NHL repeat units follow at residues 207-249 (KLYK…TLKN), 260-302 (NSGR…IDLE), 330-364 (ISSPWDVVFGNSVSGTQEDDVLWIAMAGIHQVWAL), 404-434 (FAQPSGLSLASEEPWNCLFVADSESSTVRMI), 456-500 (AFGD…VDPK), and 513-557 (ASNV…LDLE).

As to quaternary structure, monomer.

It localises to the cytoplasm. The protein resides in the cytosol. In terms of biological role, required for normal embryonic development. The protein is NHL repeat-containing protein 2 (NHLRC2) of Gallus gallus (Chicken).